The sequence spans 124 residues: Testis-expressed protein 54 (124 aa).

Over residues 1-10 (MGCCQDKDFE) the composition is skewed to basic and acidic residues. 2 disordered regions span residues 1–77 (MGCC…SNES) and 90–124 (FGRR…PEKG). Over residues 11-30 (MSDEQSKEEESEDGREDETT) the composition is skewed to acidic residues. Composition is skewed to basic and acidic residues over residues 34–50 (RGPR…RGEL) and 101–124 (RQPD…PEKG).

As to expression, expressed in Testis.

The protein is Testis-expressed protein 54 of Homo sapiens (Human).